The sequence spans 529 residues: MQQPRPIRRALLSVSDKAGIVEFAEALSQRGVELLSTGGTARLLADAGLPVTEVSDYTGFPEMMDGRVKTLHPKVHGGILGRRGQDDAIMGQHDIKPIDMVVVNLYPFAQTVARPNCSLEDAVENIDIGGPTMVRSAAKNHKDVAIVVKSSDYAAIITEMDNNDGSLQYTTRFDLAIKAFEHTAAYDSMIANYFGALVPAYHGDTEQPAGRFPRTLNLNYIKKQDMRYGENSHQQAAFYIEENVQEASVATAEQLQGKALSYNNIADTDAALECVKEFAEPACVIVKHANPCGVAIGDDILSAYERAYQTDPTSAFGGIIAFNRELDAATAQAIISRQFVEVIIAPSISQEARSLLAAKQNVRVLACGQWQQRIAALDFKRVNGGLLVQDRDLGMVSEGDLRVVSERQPTAQELRDALFCWKVAKFVKSNAIVYARDNMTIGIGAGQMSRVYSAKIAGIKAADEGLEVKGSAMASDAFFPFRDGIDAAAAVGISCVIQPGGSIRDDEVIAAANEHGIAMIFTDMRHFRH.

The MGS-like domain occupies 1-148; that stretch reads MQQPRPIRRA…KNHKDVAIVV (148 aa).

The protein belongs to the PurH family.

It carries out the reaction (6R)-10-formyltetrahydrofolate + 5-amino-1-(5-phospho-beta-D-ribosyl)imidazole-4-carboxamide = 5-formamido-1-(5-phospho-D-ribosyl)imidazole-4-carboxamide + (6S)-5,6,7,8-tetrahydrofolate. It catalyses the reaction IMP + H2O = 5-formamido-1-(5-phospho-D-ribosyl)imidazole-4-carboxamide. Its pathway is purine metabolism; IMP biosynthesis via de novo pathway; 5-formamido-1-(5-phospho-D-ribosyl)imidazole-4-carboxamide from 5-amino-1-(5-phospho-D-ribosyl)imidazole-4-carboxamide (10-formyl THF route): step 1/1. The protein operates within purine metabolism; IMP biosynthesis via de novo pathway; IMP from 5-formamido-1-(5-phospho-D-ribosyl)imidazole-4-carboxamide: step 1/1. In Serratia proteamaculans (strain 568), this protein is Bifunctional purine biosynthesis protein PurH.